A 276-amino-acid chain; its full sequence is Glucosamine-6-phosphate deaminase 2 (276 aa).

Catalysis depends on Asp-72, which acts as the Proton acceptor; for enolization step. Residues 106–130 (ILDGNATDLQAECDAFEKKIKEAGG) adopt a coiled-coil conformation. Asp-141 (for ring-opening step) is an active-site residue. The active-site Proton acceptor; for ring-opening step is His-143. The active-site For ring-opening step is the Glu-148. Thr-161 is modified (phosphothreonine).

Belongs to the glucosamine/galactosamine-6-phosphate isomerase family. As to quaternary structure, homohexamer.

The protein resides in the cytoplasm. The catalysed reaction is alpha-D-glucosamine 6-phosphate + H2O = beta-D-fructose 6-phosphate + NH4(+). It functions in the pathway nucleotide-sugar biosynthesis; UDP-N-acetyl-alpha-D-glucosamine biosynthesis; alpha-D-glucosamine 6-phosphate from D-fructose 6-phosphate: step 1/1. Allosterically activated by N-acetylglucosamine-6-phosphate (GlcNAc6P). Its function is as follows. Catalyzes the reversible conversion of alpha-D-glucosamine 6-phosphate (GlcN-6P) into beta-D-fructose 6-phosphate (Fru-6P) and ammonium ion, a regulatory reaction step in de novo uridine diphosphate-N-acetyl-alpha-D-glucosamine (UDP-GlcNAc) biosynthesis via hexosamine pathway. Deamination is coupled to aldo-keto isomerization mediating the metabolic flux from UDP-GlcNAc toward Fru-6P. At high ammonium level can drive amination and isomerization of Fru-6P toward hexosamines and UDP-GlcNAc synthesis. Has a role in fine tuning the metabolic fluctuations of cytosolic UDP-GlcNAc and their effects on hyaluronan synthesis that occur during tissue remodeling. In Bos taurus (Bovine), this protein is Glucosamine-6-phosphate deaminase 2.